The sequence spans 451 residues: Bifunctional protein GlmU (451 aa).

The segment at 1–231 (MDSPLAIIVL…ADEVAGINSR (231 aa)) is pyrophosphorylase. UDP-N-acetyl-alpha-D-glucosamine contacts are provided by residues 10–13 (LAAG), lysine 24, glutamine 74, 79–80 (GT), 102–104 (YGD), glycine 142, glutamate 156, asparagine 171, and asparagine 229. Position 104 (aspartate 104) interacts with Mg(2+). Asparagine 229 lines the Mg(2+) pocket. Residues 232–252 (GELAEAEGRWQQRRRAAAMAD) form a linker region. The segment at 253–451 (GASLIAPETV…MKKKKAEKKS (199 aa)) is N-acetyltransferase. Residues arginine 318 and lysine 336 each coordinate UDP-N-acetyl-alpha-D-glucosamine. The Proton acceptor role is filled by histidine 348. Residues tyrosine 351 and asparagine 362 each contribute to the UDP-N-acetyl-alpha-D-glucosamine site. Residues alanine 365, 371–372 (NY), serine 390, alanine 408, and arginine 425 each bind acetyl-CoA.

It in the N-terminal section; belongs to the N-acetylglucosamine-1-phosphate uridyltransferase family. This sequence in the C-terminal section; belongs to the transferase hexapeptide repeat family. In terms of assembly, homotrimer. The cofactor is Mg(2+).

The protein resides in the cytoplasm. It catalyses the reaction alpha-D-glucosamine 1-phosphate + acetyl-CoA = N-acetyl-alpha-D-glucosamine 1-phosphate + CoA + H(+). The catalysed reaction is N-acetyl-alpha-D-glucosamine 1-phosphate + UTP + H(+) = UDP-N-acetyl-alpha-D-glucosamine + diphosphate. Its pathway is nucleotide-sugar biosynthesis; UDP-N-acetyl-alpha-D-glucosamine biosynthesis; N-acetyl-alpha-D-glucosamine 1-phosphate from alpha-D-glucosamine 6-phosphate (route II): step 2/2. It participates in nucleotide-sugar biosynthesis; UDP-N-acetyl-alpha-D-glucosamine biosynthesis; UDP-N-acetyl-alpha-D-glucosamine from N-acetyl-alpha-D-glucosamine 1-phosphate: step 1/1. It functions in the pathway bacterial outer membrane biogenesis; LPS lipid A biosynthesis. Catalyzes the last two sequential reactions in the de novo biosynthetic pathway for UDP-N-acetylglucosamine (UDP-GlcNAc). The C-terminal domain catalyzes the transfer of acetyl group from acetyl coenzyme A to glucosamine-1-phosphate (GlcN-1-P) to produce N-acetylglucosamine-1-phosphate (GlcNAc-1-P), which is converted into UDP-GlcNAc by the transfer of uridine 5-monophosphate (from uridine 5-triphosphate), a reaction catalyzed by the N-terminal domain. The protein is Bifunctional protein GlmU of Novosphingobium aromaticivorans (strain ATCC 700278 / DSM 12444 / CCUG 56034 / CIP 105152 / NBRC 16084 / F199).